Reading from the N-terminus, the 139-residue chain is D-ribose pyranase (139 aa).

Histidine 20 functions as the Proton donor in the catalytic mechanism. Substrate-binding positions include aspartate 28, histidine 106, and 128-130; that span reads FAN.

This sequence belongs to the RbsD / FucU family. RbsD subfamily. Homodecamer.

It localises to the cytoplasm. It carries out the reaction beta-D-ribopyranose = beta-D-ribofuranose. It participates in carbohydrate metabolism; D-ribose degradation; D-ribose 5-phosphate from beta-D-ribopyranose: step 1/2. In terms of biological role, catalyzes the interconversion of beta-pyran and beta-furan forms of D-ribose. This chain is D-ribose pyranase, found in Yersinia pseudotuberculosis serotype O:1b (strain IP 31758).